Here is an 83-residue protein sequence, read N- to C-terminus: Hepcidin (83 aa).

A signal peptide spans 1-23 (MALSTRTQAACLLLLLLASLSST). A propeptide spanning residues 24–53 (TYLHQQMRQTTELQPLHGEESRADIAIPMQ) is cleaved from the precursor. 4 cysteine pairs are disulfide-bonded: C65–C81, C68–C71, C69–C77, and C72–C80.

It belongs to the hepcidin family. As to quaternary structure, interacts with SLC40A1; this interaction promotes SLC40A1 rapid ubiquitination. In terms of tissue distribution, highly expressed in the liver and to a much lesser extent in the heart. Secreted in blood.

Its subcellular location is the secreted. Its function is as follows. Liver-produced hormone that constitutes the main circulating regulator of iron absorption and distribution across tissues. Acts by promoting endocytosis and degradation of SLC40A1, leading to the retention of iron in iron-exporting cells and decreased flow of iron into plasma. Controls the major flows of iron into plasma: absorption of dietary iron in the intestine, recycling of iron by macrophages, which phagocytose old erythrocytes and other cells, and mobilization of stored iron from hepatocytes. This Mus musculus (Mouse) protein is Hepcidin (Hamp).